The primary structure comprises 292 residues: Small ribosomal subunit biogenesis GTPase RsgA (292 aa).

The 158-residue stretch at 64–221 folds into the CP-type G domain; the sequence is RSELFRPAVA…LVDTPGFSSL (158 aa). GTP-binding positions include 113-116 and 164-172; these read NKMD and GPSGVGKST. Residues cysteine 245, cysteine 250, histidine 252, and cysteine 258 each coordinate Zn(2+).

It belongs to the TRAFAC class YlqF/YawG GTPase family. RsgA subfamily. In terms of assembly, monomer. Associates with 30S ribosomal subunit, binds 16S rRNA. It depends on Zn(2+) as a cofactor.

Its subcellular location is the cytoplasm. One of several proteins that assist in the late maturation steps of the functional core of the 30S ribosomal subunit. Helps release RbfA from mature subunits. May play a role in the assembly of ribosomal proteins into the subunit. Circularly permuted GTPase that catalyzes slow GTP hydrolysis, GTPase activity is stimulated by the 30S ribosomal subunit. In Clostridium botulinum (strain ATCC 19397 / Type A), this protein is Small ribosomal subunit biogenesis GTPase RsgA.